Consider the following 232-residue polypeptide: Orotate phosphoribosyltransferase (232 aa).

Residues Arg-107, Lys-108, Lys-111, His-113, and 133–141 (EDLTTAGGS) contribute to the 5-phospho-alpha-D-ribose 1-diphosphate site. Position 137 (Thr-137) interacts with orotate.

The protein belongs to the purine/pyrimidine phosphoribosyltransferase family. PyrE subfamily. As to quaternary structure, homodimer. Mg(2+) serves as cofactor.

It carries out the reaction orotidine 5'-phosphate + diphosphate = orotate + 5-phospho-alpha-D-ribose 1-diphosphate. The protein operates within pyrimidine metabolism; UMP biosynthesis via de novo pathway; UMP from orotate: step 1/2. Functionally, catalyzes the transfer of a ribosyl phosphate group from 5-phosphoribose 1-diphosphate to orotate, leading to the formation of orotidine monophosphate (OMP). In Rhizobium rhizogenes (strain K84 / ATCC BAA-868) (Agrobacterium radiobacter), this protein is Orotate phosphoribosyltransferase.